The sequence spans 374 residues: Cytochrome b (374 aa).

Transmembrane regions (helical) follow at residues 25 to 45, 69 to 90, 105 to 125, and 170 to 190; these read FGSM…FLAI, WIIQ…YMHI, WLSG…GYVL, and FFAL…IHII. Heme b is bound by residues His-75 and His-89. Positions 174 and 188 each coordinate heme b. His-193 lines the a ubiquinone pocket. 4 consecutive transmembrane segments (helical) span residues 218–238, 280–300, 312–332, and 339–358; these read YKDM…LSFT, LGGA…PFTH, LAQI…WTAT, and FITI…MINP.

It belongs to the cytochrome b family. The cytochrome bc1 complex contains 3 respiratory subunits (MT-CYB, CYC1 and UQCRFS1), 2 core proteins (UQCRC1 and UQCRC2) and probably 6 low-molecular weight proteins. Requires heme b as cofactor.

It is found in the mitochondrion inner membrane. Functionally, component of the ubiquinol-cytochrome c reductase complex (complex III or cytochrome b-c1 complex) that is part of the mitochondrial respiratory chain. The b-c1 complex mediates electron transfer from ubiquinol to cytochrome c. Contributes to the generation of a proton gradient across the mitochondrial membrane that is then used for ATP synthesis. This is Cytochrome b (MT-CYB) from Calliophis bivirgatus (Blue Malaysian coral snake).